The following is a 507-amino-acid chain: Maturase K (507 aa).

Belongs to the intron maturase 2 family. MatK subfamily.

It is found in the plastid. The protein localises to the chloroplast. Usually encoded in the trnK tRNA gene intron. Probably assists in splicing its own and other chloroplast group II introns. The protein is Maturase K of Magnolia champaca (Yellow jade orchid tree).